Consider the following 251-residue polypeptide: 7-cyano-7-deazaguanine synthase (251 aa).

Residues 1–21 form a disordered region; it reads MSDLPRHSPRRQHAGESAVTA. An ATP-binding site is contributed by 35–45; sequence YSGGMDSYTVL. Zn(2+) is bound by residues cysteine 212, cysteine 220, cysteine 223, and cysteine 226.

The protein belongs to the QueC family. Requires Zn(2+) as cofactor.

The catalysed reaction is 7-carboxy-7-deazaguanine + NH4(+) + ATP = 7-cyano-7-deazaguanine + ADP + phosphate + H2O + H(+). The protein operates within purine metabolism; 7-cyano-7-deazaguanine biosynthesis. Catalyzes the ATP-dependent conversion of 7-carboxy-7-deazaguanine (CDG) to 7-cyano-7-deazaguanine (preQ(0)). This Chromohalobacter salexigens (strain ATCC BAA-138 / DSM 3043 / CIP 106854 / NCIMB 13768 / 1H11) protein is 7-cyano-7-deazaguanine synthase.